The sequence spans 215 residues: Translation initiation factor 6 (215 aa).

Belongs to the eIF-6 family.

Its function is as follows. Binds to the 50S ribosomal subunit and prevents its association with the 30S ribosomal subunit to form the 70S initiation complex. The polypeptide is Translation initiation factor 6 (Archaeoglobus fulgidus (strain ATCC 49558 / DSM 4304 / JCM 9628 / NBRC 100126 / VC-16)).